The primary structure comprises 189 residues: Transcription factor FapR (189 aa).

The protein belongs to the FapR family.

Transcriptional factor involved in regulation of membrane lipid biosynthesis by repressing genes involved in fatty acid and phospholipid metabolism. The polypeptide is Transcription factor FapR (Exiguobacterium sibiricum (strain DSM 17290 / CCUG 55495 / CIP 109462 / JCM 13490 / 255-15)).